Reading from the N-terminus, the 98-residue chain is NADH-ubiquinone oxidoreductase chain 4L (98 aa).

The next 3 membrane-spanning stretches (helical) occupy residues 1-21 (MTMVYANIFLAFTTSLMGLLM), 29-49 (SLLCLEGMMLSLFVMMTVTIL), and 61-81 (IILLVFAACEAALGLSLLVMV).

This sequence belongs to the complex I subunit 4L family. As to quaternary structure, core subunit of respiratory chain NADH dehydrogenase (Complex I) which is composed of 45 different subunits.

Its subcellular location is the mitochondrion inner membrane. The catalysed reaction is a ubiquinone + NADH + 5 H(+)(in) = a ubiquinol + NAD(+) + 4 H(+)(out). Its function is as follows. Core subunit of the mitochondrial membrane respiratory chain NADH dehydrogenase (Complex I) which catalyzes electron transfer from NADH through the respiratory chain, using ubiquinone as an electron acceptor. Part of the enzyme membrane arm which is embedded in the lipid bilayer and involved in proton translocation. This Neomonachus schauinslandi (Hawaiian monk seal) protein is NADH-ubiquinone oxidoreductase chain 4L (MT-ND4L).